Here is a 174-residue protein sequence, read N- to C-terminus: Vimentin-type intermediate filament-associated coiled-coil protein (174 aa).

Positions L7–L97 form a coiled coil. Residues G128–V174 are disordered.

The protein localises to the cytoplasm. This chain is Vimentin-type intermediate filament-associated coiled-coil protein (Vmac), found in Mus musculus (Mouse).